Here is a 350-residue protein sequence, read N- to C-terminus: N-acetyl-gamma-glutamyl-phosphate reductase (350 aa).

Cys154 is an active-site residue.

It belongs to the NAGSA dehydrogenase family. Type 1 subfamily.

The protein resides in the cytoplasm. The catalysed reaction is N-acetyl-L-glutamate 5-semialdehyde + phosphate + NADP(+) = N-acetyl-L-glutamyl 5-phosphate + NADPH + H(+). The protein operates within amino-acid biosynthesis; L-arginine biosynthesis; N(2)-acetyl-L-ornithine from L-glutamate: step 3/4. Its function is as follows. Catalyzes the NADPH-dependent reduction of N-acetyl-5-glutamyl phosphate to yield N-acetyl-L-glutamate 5-semialdehyde. The sequence is that of N-acetyl-gamma-glutamyl-phosphate reductase from Corynebacterium efficiens (strain DSM 44549 / YS-314 / AJ 12310 / JCM 11189 / NBRC 100395).